Consider the following 126-residue polypeptide: Aspartate 1-decarboxylase (126 aa).

Ser25 acts as the Schiff-base intermediate with substrate; via pyruvic acid in catalysis. Ser25 carries the post-translational modification Pyruvic acid (Ser). Thr57 lines the substrate pocket. Catalysis depends on Tyr58, which acts as the Proton donor. 73 to 75 provides a ligand contact to substrate; that stretch reads GAA.

The protein belongs to the PanD family. In terms of assembly, heterooctamer of four alpha and four beta subunits. Requires pyruvate as cofactor. Is synthesized initially as an inactive proenzyme, which is activated by self-cleavage at a specific serine bond to produce a beta-subunit with a hydroxyl group at its C-terminus and an alpha-subunit with a pyruvoyl group at its N-terminus.

The protein resides in the cytoplasm. The enzyme catalyses L-aspartate + H(+) = beta-alanine + CO2. It participates in cofactor biosynthesis; (R)-pantothenate biosynthesis; beta-alanine from L-aspartate: step 1/1. Its function is as follows. Catalyzes the pyruvoyl-dependent decarboxylation of aspartate to produce beta-alanine. This is Aspartate 1-decarboxylase from Pseudomonas aeruginosa (strain LESB58).